Consider the following 168-residue polypeptide: Phosphopantetheine adenylyltransferase (168 aa).

A substrate-binding site is contributed by T14. Residues 14–15 (TF) and H22 each bind ATP. Positions 46, 78, and 92 each coordinate substrate. ATP contacts are provided by residues 93-95 (GLR), E103, and 128-134 (YSFISSS).

It belongs to the bacterial CoaD family. In terms of assembly, homohexamer. It depends on Mg(2+) as a cofactor.

The protein localises to the cytoplasm. The catalysed reaction is (R)-4'-phosphopantetheine + ATP + H(+) = 3'-dephospho-CoA + diphosphate. It functions in the pathway cofactor biosynthesis; coenzyme A biosynthesis; CoA from (R)-pantothenate: step 4/5. In terms of biological role, reversibly transfers an adenylyl group from ATP to 4'-phosphopantetheine, yielding dephospho-CoA (dPCoA) and pyrophosphate. The polypeptide is Phosphopantetheine adenylyltransferase (Xanthomonas axonopodis pv. citri (strain 306)).